Reading from the N-terminus, the 49-residue chain is Large ribosomal subunit protein bL33A (49 aa).

The protein belongs to the bacterial ribosomal protein bL33 family.

The polypeptide is Large ribosomal subunit protein bL33A (Bacillus licheniformis (strain ATCC 14580 / DSM 13 / JCM 2505 / CCUG 7422 / NBRC 12200 / NCIMB 9375 / NCTC 10341 / NRRL NRS-1264 / Gibson 46)).